The primary structure comprises 296 residues: Glycine--tRNA ligase alpha subunit (296 aa).

It belongs to the class-II aminoacyl-tRNA synthetase family. In terms of assembly, tetramer of two alpha and two beta subunits.

Its subcellular location is the cytoplasm. The enzyme catalyses tRNA(Gly) + glycine + ATP = glycyl-tRNA(Gly) + AMP + diphosphate. The chain is Glycine--tRNA ligase alpha subunit from Listeria welshimeri serovar 6b (strain ATCC 35897 / DSM 20650 / CCUG 15529 / CIP 8149 / NCTC 11857 / SLCC 5334 / V8).